We begin with the raw amino-acid sequence, 155 residues long: Aspartate carbamoyltransferase regulatory chain (155 aa).

Zn(2+) is bound by residues cysteine 110, cysteine 115, cysteine 139, and cysteine 142.

The protein belongs to the PyrI family. Contains catalytic and regulatory chains. Zn(2+) serves as cofactor.

In terms of biological role, involved in allosteric regulation of aspartate carbamoyltransferase. The protein is Aspartate carbamoyltransferase regulatory chain of Yersinia pestis bv. Antiqua (strain Antiqua).